Reading from the N-terminus, the 428-residue chain is Palmitoyltransferase ZDHHC23-B (428 aa).

Topologically, residues 1–82 (MSIMKKRSSR…RVPWISGARQ (82 aa)) are cytoplasmic. Residues 83–99 (IDVSLIPPLILLPVFLH) form a helical membrane-spanning segment. The Lumenal segment spans residues 100–105 (IAALHY). The helical transmembrane segment at 106–125 (LLGIIMLTAMPITVLWYYFF) threads the bilayer. Residues 126 to 132 (THRKKGR) lie on the Cytoplasmic side of the membrane. A helical transmembrane segment spans residues 133 to 153 (TLFFLGLALFSLFYMFYLFLT). Residues 154–160 (QVVPRGE) lie on the Lumenal side of the membrane. Residues 161 to 181 (VTELQLAVVTAGVALTVIFLM) form a helical membrane-spanning segment. The Cytoplasmic portion of the chain corresponds to 182 to 294 (LTKRGPGLVR…SCVGLANHRT (113 aa)). Residues 250–300 (NWCAVCKVVRPQRAGHCRICGVCVLRLDHHCVWINSCVGLANHRTFLLTLL) form the DHHC domain. C280 serves as the catalytic S-palmitoyl cysteine intermediate. A helical membrane pass occupies residues 295–315 (FLLTLLFFLLTSIYGISLVLA). Residues 316–350 (SVCPDQRVLTALFYCPDVYSQYSSALCFTCAWYSS) are Lumenal-facing. Residues 351–371 (IVTGGLLHLLLLQILNISLNV) form a helical membrane-spanning segment. Over 372–428 (TEREARLALREKSAQRRLWGLIVHTGHYSRGFWSNWTEFLTMTEDTQPAGHKTEDLV) the chain is Cytoplasmic.

The protein belongs to the DHHC palmitoyltransferase family.

The protein localises to the golgi apparatus membrane. It is found in the golgi apparatus. Its subcellular location is the trans-Golgi network membrane. It catalyses the reaction L-cysteinyl-[protein] + hexadecanoyl-CoA = S-hexadecanoyl-L-cysteinyl-[protein] + CoA. In terms of biological role, palmitoyltransferase that could catalyze the addition of palmitate onto various protein substrates and be involved in a variety of cellular processes. The polypeptide is Palmitoyltransferase ZDHHC23-B (Danio rerio (Zebrafish)).